Consider the following 543-residue polypeptide: CTP synthase (543 aa).

The amidoligase domain stretch occupies residues 1-265 (MTRYVFITGG…DREVLRHFGL (265 aa)). Serine 13 contributes to the CTP binding site. Residue serine 13 participates in UTP binding. Position 14-19 (14-19 (SLGKGI)) interacts with ATP. Residue tyrosine 54 participates in L-glutamine binding. Aspartate 71 lines the ATP pocket. Positions 71 and 139 each coordinate Mg(2+). CTP contacts are provided by residues 146–148 (DIE), 186–191 (KTKPTQ), and lysine 222. Residues 186 to 191 (KTKPTQ) and lysine 222 contribute to the UTP site. Valine 240 provides a ligand contact to ATP. Positions 291-542 (TIAVVGKYTN…IEAAVKQMRL (252 aa)) constitute a Glutamine amidotransferase type-1 domain. Glycine 353 contacts L-glutamine. Cysteine 380 serves as the catalytic Nucleophile; for glutamine hydrolysis. Residues 381–384 (FGMQ), glutamate 404, and arginine 470 each bind L-glutamine. Active-site residues include histidine 515 and glutamate 517.

It belongs to the CTP synthase family. In terms of assembly, homotetramer.

The catalysed reaction is UTP + L-glutamine + ATP + H2O = CTP + L-glutamate + ADP + phosphate + 2 H(+). The enzyme catalyses L-glutamine + H2O = L-glutamate + NH4(+). It catalyses the reaction UTP + NH4(+) + ATP = CTP + ADP + phosphate + 2 H(+). Its pathway is pyrimidine metabolism; CTP biosynthesis via de novo pathway; CTP from UDP: step 2/2. With respect to regulation, allosterically activated by GTP, when glutamine is the substrate; GTP has no effect on the reaction when ammonia is the substrate. The allosteric effector GTP functions by stabilizing the protein conformation that binds the tetrahedral intermediate(s) formed during glutamine hydrolysis. Inhibited by the product CTP, via allosteric rather than competitive inhibition. In terms of biological role, catalyzes the ATP-dependent amination of UTP to CTP with either L-glutamine or ammonia as the source of nitrogen. Regulates intracellular CTP levels through interactions with the four ribonucleotide triphosphates. This is CTP synthase from Acidiphilium cryptum (strain JF-5).